The sequence spans 89 residues: Cell division topological specificity factor (89 aa).

It belongs to the MinE family.

In terms of biological role, prevents the cell division inhibition by proteins MinC and MinD at internal division sites while permitting inhibition at polar sites. This ensures cell division at the proper site by restricting the formation of a division septum at the midpoint of the long axis of the cell. The chain is Cell division topological specificity factor from Edwardsiella ictaluri (strain 93-146).